The primary structure comprises 208 residues: Holliday junction resolvase RecU (208 aa).

Residues T87, D89, E102, and Q121 each coordinate Mg(2+).

Belongs to the RecU family. Mg(2+) is required as a cofactor.

It localises to the cytoplasm. It carries out the reaction Endonucleolytic cleavage at a junction such as a reciprocal single-stranded crossover between two homologous DNA duplexes (Holliday junction).. Endonuclease that resolves Holliday junction intermediates in genetic recombination. Cleaves mobile four-strand junctions by introducing symmetrical nicks in paired strands. Promotes annealing of linear ssDNA with homologous dsDNA. Required for DNA repair, homologous recombination and chromosome segregation. The polypeptide is Holliday junction resolvase RecU (Staphylococcus aureus (strain MRSA252)).